A 1434-amino-acid polypeptide reads, in one-letter code: Probable ATP-dependent RNA helicase spindle-E (1434 aa).

Positions 66–86 (VGGPSNTKRTKTLDELESDDD) are disordered. Residues 127–294 (MKAIKENPVV…FASCKSMPPV (168 aa)) form the Helicase ATP-binding domain. Residue 140 to 147 (GETGCGKT) coordinates ATP. The short motif at 240 to 243 (DEVH) is the DEAH box element. Residues 354–526 (QSEQSYEEAK…SSVLKAKELD (173 aa)) enclose the Helicase C-terminal domain. A Tudor domain is found at 938 to 1001 (ASAITKGLQL…RLMRHELRRD (64 aa)).

This sequence belongs to the DEAD box helicase family. DEAH subfamily.

The protein localises to the cytoplasm. The catalysed reaction is ATP + H2O = ADP + phosphate + H(+). Probable ATP-binding RNA helicase which plays a central role during spermatogenesis and oogenesis by repressing transposable elements and preventing their mobilization, which is essential for the germline integrity. Acts via the piRNA metabolic process, which mediates the repression of transposable elements during meiosis by forming complexes composed of piRNAs and Piwi and govern the methylation and subsequent repression of transposons. Involved in the repression of LTR retrotransposon copia. Also involved in telomere regulation by repressing specialized telomeric retroelements HeT-A, TAHRE, and TART; Drosophila telomeres being maintained by transposition of specialized telomeric retroelements. Involved in telomeric trans-silencing, a repression mechanism by which a transposon or a transgene inserted in subtelomeric heterochromatin has the capacity to repress in trans in the female germline, a homologous transposon, or transgene located in euchromatin. Involved in the repression of testis-expressed Stellate genes by the homologous Su(Ste) repeats. Required for anteroposterior and dorsoventral axis formation during oogenesis. In Drosophila grimshawi (Hawaiian fruit fly), this protein is Probable ATP-dependent RNA helicase spindle-E (spn-E).